The primary structure comprises 72 residues: Translation initiation factor IF-1 (72 aa).

The S1-like domain maps to 1-72 (MAKEEQIELE…TKGRITFRMK (72 aa)).

It belongs to the IF-1 family. As to quaternary structure, component of the 30S ribosomal translation pre-initiation complex which assembles on the 30S ribosome in the order IF-2 and IF-3, IF-1 and N-formylmethionyl-tRNA(fMet); mRNA recruitment can occur at any time during PIC assembly.

It is found in the cytoplasm. In terms of biological role, one of the essential components for the initiation of protein synthesis. Stabilizes the binding of IF-2 and IF-3 on the 30S subunit to which N-formylmethionyl-tRNA(fMet) subsequently binds. Helps modulate mRNA selection, yielding the 30S pre-initiation complex (PIC). Upon addition of the 50S ribosomal subunit IF-1, IF-2 and IF-3 are released leaving the mature 70S translation initiation complex. The polypeptide is Translation initiation factor IF-1 (Alcanivorax borkumensis (strain ATCC 700651 / DSM 11573 / NCIMB 13689 / SK2)).